We begin with the raw amino-acid sequence, 206 residues long: Orotate phosphoribosyltransferase (206 aa).

5-phospho-alpha-D-ribose 1-diphosphate is bound by residues Arg97, Lys98, Lys101, and 125-133; that span reads NDVIASGRS. Arg157 provides a ligand contact to orotate.

The protein belongs to the purine/pyrimidine phosphoribosyltransferase family. PyrE subfamily. Homodimer. Mg(2+) serves as cofactor.

It catalyses the reaction orotidine 5'-phosphate + diphosphate = orotate + 5-phospho-alpha-D-ribose 1-diphosphate. Its pathway is pyrimidine metabolism; UMP biosynthesis via de novo pathway; UMP from orotate: step 1/2. Catalyzes the transfer of a ribosyl phosphate group from 5-phosphoribose 1-diphosphate to orotate, leading to the formation of orotidine monophosphate (OMP). In Chlamydia felis (strain Fe/C-56) (Chlamydophila felis), this protein is Orotate phosphoribosyltransferase.